A 181-amino-acid polypeptide reads, in one-letter code: U1 small nuclear ribonucleoprotein C (181 aa).

A Matrin-type zinc finger spans residues 2 to 34 (PKCDYCDVYLTHDSMSVRKAHNSGRNHLRNVVD). 2 stretches are compositionally biased toward pro residues: residues 129–143 (PGMP…PGGL) and 150–174 (PIPP…PPPG). The segment at 129–181 (PGMPAGMPFPPPGGLPPNFQFPIPPPGGFPGMPPPGQGFPGMPPPGGNHDERR) is disordered.

Belongs to the U1 small nuclear ribonucleoprotein C family. As to quaternary structure, U1 snRNP is composed of the 7 core Sm proteins B/B', D1, D2, D3, E, F and G that assemble in a heptameric protein ring on the Sm site of the small nuclear RNA to form the core snRNP, and at least 3 U1 snRNP-specific proteins U1-70K, U1-A and U1-C. U1-C interacts with U1 snRNA and the 5' splice-site region of the pre-mRNA.

The protein localises to the nucleus. Functionally, component of the spliceosomal U1 snRNP, which is essential for recognition of the pre-mRNA 5' splice-site and the subsequent assembly of the spliceosome. U1-C is directly involved in initial 5' splice-site recognition for both constitutive and regulated alternative splicing. The interaction with the 5' splice-site seems to precede base-pairing between the pre-mRNA and the U1 snRNA. Stimulates commitment or early (E) complex formation by stabilizing the base pairing of the 5' end of the U1 snRNA and the 5' splice-site region. This chain is U1 small nuclear ribonucleoprotein C, found in Sclerotinia sclerotiorum (strain ATCC 18683 / 1980 / Ss-1) (White mold).